The primary structure comprises 453 residues: G-protein coupled receptor 39 (453 aa).

The Extracellular portion of the chain corresponds to 1 to 34; that stretch reads MASPSLPGSDCSQIIDHSHVPEFEVATWIKITLI. Disulfide bonds link cysteine 11–cysteine 191 and cysteine 108–cysteine 210. Residues histidine 17 and histidine 19 each contribute to the Zn(2+) site. A helical transmembrane segment spans residues 35 to 55; the sequence is LVYLIIFVMGLLGNSATIRVT. Residues 56–69 are Cytoplasmic-facing; the sequence is QVLQKKGYLQKEVT. Residues 70–89 traverse the membrane as a helical segment; it reads DHMVSLACSDILVFLIGMPM. Topologically, residues 90-109 are extracellular; it reads EFYSIIWNPLTTSSYTLSCK. Residues 110–131 traverse the membrane as a helical segment; the sequence is LHTFLFEACSYATLLHVLTLSF. At 132–151 the chain is on the cytoplasmic side; that stretch reads ERYIAICHPFRYKAVSGPCQ. Residues 152–172 form a helical membrane-spanning segment; that stretch reads VKLLIGFVWVTSALVALPLLF. The Extracellular segment spans residues 173–217; the sequence is AMGTEYPLVNVPSHRGLTCNRSSTRHHEQPETSNMSICTNLSSRW. N-linked (GlcNAc...) asparagine glycans are attached at residues asparagine 192, asparagine 206, and asparagine 212. The helical transmembrane segment at 218–242 threads the bilayer; the sequence is TVFQSSIFGAFVVYLVVLLSVAFMC. The Cytoplasmic portion of the chain corresponds to 243 to 283; sequence WNMMQVLMKSQKGSLAGGTRPPQLRKSESEESRTARRQTII. Positions 255–274 are disordered; sequence GSLAGGTRPPQLRKSESEES. Residues 284–305 form a helical membrane-spanning segment; sequence FLRLIVVTLAVCWMPNQIRRIM. Topologically, residues 306–323 are extracellular; the sequence is AAAKPKHDWTRSYFRAYM. A helical membrane pass occupies residues 324 to 344; the sequence is ILLPFSETFFYLSSVINPLLY. Over 345–453 the chain is Cytoplasmic; it reads TVSSQQFRRV…AENGFQEHEV (109 aa). Serine 396 bears the Phosphoserine mark. Residues 415–453 are disordered; sequence SEAEPQSKSQSLSLESLEPNSGAKPANSAAENGFQEHEV. Low complexity predominate over residues 418-435; the sequence is EPQSKSQSLSLESLEPNS.

It belongs to the G-protein coupled receptor 1 family. In terms of assembly, interacts with HTR1A. Interacts with GALR1. Expressed in many tissues, including the stomach, intestine and hypothalamus.

The protein resides in the cell membrane. Zinc-sensing receptor that can sense changes in extracellular Zn(2+), mediate Zn(2+) signal transmission, and participates in the regulation of numerous physiological processes including glucose homeostasis regulation, gastrointestinal mobility, hormone secretion and cell death. Activation by Zn(2+) in keratinocytes increases the intracellular concentration of Ca(2+) and activates the ERK/MAPK and PI3K/AKT signaling pathways leading to epithelial repair. Plays an essential role in normal wound healing by inducing the production of cytokines including the major inflammatory cytokine IL6 via the PKC/MAPK/CEBPB pathway. Regulates adipose tissue metabolism, especially lipolysis, and regulates the function of lipases, such as hormone-sensitive lipase and adipose triglyceride lipase. Plays a role in the inhibition of cell death and protects against oxidative, endoplasmic reticulum and mitochondrial stress by inducing secretion of the cytoprotective pigment epithelium-derived growth factor (PEDF) and probably other protective transcripts in a GNA13/RHOA/SRE-dependent manner. Forms dynamic heteroreceptor complexes with HTR1A and GALR1 depending on cell type or specific physiological states, resulting in signaling diversity: HTR1A-GPR39 shows additive increase in signaling along the serum response element (SRE) and NF-kappa-B pathways while GALR1 acts as an antagonist blocking SRE. The chain is G-protein coupled receptor 39 (GPR39) from Homo sapiens (Human).